The following is a 326-amino-acid chain: Small ribosomal subunit protein RACK1x (326 aa).

7 WD repeats span residues A13–G53, G61–R100, G103–I142, G147–S188, G191–S230, E232–D270, and N290–Y326.

The protein belongs to the WD repeat G protein beta family. Ribosomal protein RACK1 subfamily. In terms of assembly, homodimer and heterodimer with RACK1A or RACK1B. Interacts with GB1, MEKK1, MKK4, MKK5, MPK3 and MPK6, but not with GPA1 or MPK4. As to expression, widely expressed.

In terms of biological role, minor component of the RACK1 regulatory proteins that play a role in multiple signal transduction pathways. Involved in multiple hormone responses and developmental processes. MAPK cascade scaffolding protein involved in the protease IV and ArgC signaling pathway but not the flg22 pathway. The chain is Small ribosomal subunit protein RACK1x from Arabidopsis thaliana (Mouse-ear cress).